The sequence spans 596 residues: Sodium/mannose cotransporter SLC5A10 (596 aa).

Residues 1–15 (MAANSTSDLHTPGTQ) lie on the Extracellular side of the membrane. N-linked (GlcNAc...) asparagine glycosylation occurs at N4. The helical transmembrane segment at 16-36 (LSVADIIVITVYFALNVAVGI) threads the bilayer. Over 37-72 (WSSCRASRNTVNGYFLAGRDMTWWPIGASLFASSEG) the chain is Cytoplasmic. A helical membrane pass occupies residues 73-93 (SGLFIGLAGSGAAGGLAVAGF). The Extracellular portion of the chain corresponds to 94–99 (EWNATY). Residue N96 is glycosylated (N-linked (GlcNAc...) asparagine). A helical transmembrane segment spans residues 100–120 (VLLALAWVFVPIYISSEIVTL). At 121-149 (PEYIQKRYGGQRIRMYLSVLSLLLSVFTK) the chain is on the cytoplasmic side. S141 and S145 each carry phosphoserine. The residue at position 148 (T148) is a Phosphothreonine. Residues 150–170 (ISLDLYAGALFVHICLGWNFY) form a helical membrane-spanning segment. The Extracellular segment spans residues 171–173 (LST). A helical membrane pass occupies residues 174–194 (ILTLGITALYTIAGGLAAVIY). Over 195–200 (TDALQT) the chain is Cytoplasmic. A helical transmembrane segment spans residues 201-221 (LIMVVGAVILTIKAFDQIGGY). At 222–264 (GQLEAAYAQAIPSRTIANTTCHLPRTDAMHMFRDPHTGDLPWT) the chain is on the extracellular side. Residues 265–285 (GMTFGLTIMATWYWCTDQVIV) traverse the membrane as a helical segment. The Cytoplasmic portion of the chain corresponds to 286–300 (QRSLSARDLNHAKAG). Residues 301–321 (SILASYLKMLPMGLIIMPGMI) form a helical membrane-spanning segment. The Extracellular portion of the chain corresponds to 322–355 (SRALFPDDVGCVVPSECLRACGAEVGCSNIAYPK). Residues 356–376 (LVMELMPIGLRGLMIAVMLAA) form a helical membrane-spanning segment. Residues 377–409 (LMSSLTSIFNSSSTLFTMDIWRRLRPRSGEREL) lie on the Cytoplasmic side of the membrane. Residues 410–430 (LLVGRLVIVALIGVSVAWIPV) traverse the membrane as a helical segment. Over 431–443 (LQDSNSGQLFIYM) the chain is Extracellular. A helical membrane pass occupies residues 444–464 (QSVTSSLAPPVTAVFVLGVFW). Residues 465 to 471 (RRANEQG) lie on the Cytoplasmic side of the membrane. A helical membrane pass occupies residues 472-492 (AFWGLIAGLVVGATRLVLEFL). Topologically, residues 493-513 (NPAPPCGEPDTRPAVLGSIHY) are extracellular. The chain crosses the membrane as a helical span at residues 514-534 (LHFAVALFALSGAVVVAGSLL). The Cytoplasmic portion of the chain corresponds to 535 to 575 (TPPPQSVQIENLTWWTLAQDVPLGTKAGDGQTPQKHAFWAR). A helical membrane pass occupies residues 576-596 (VCGFNAILLMCVNIFFYAYFA).

The protein belongs to the sodium:solute symporter (SSF) (TC 2.A.21) family. In terms of tissue distribution, predominantly expressed at high levels in kidney. Very low expression is detected in testes. As to expression, expressed in kidney. The most abundant isoform expressed in kidney.

The protein localises to the apical cell membrane. The catalysed reaction is D-mannose(out) + Na(+)(out) = D-mannose(in) + Na(+)(in). It catalyses the reaction D-fructopyranose(out) + Na(+)(out) = D-fructopyranose(in) + Na(+)(in). Inhibited by phlorizin. Electrogenic Na+-coupled sugar symporter that actively transports D-mannose or D-fructose at the plasma membrane, with a Na+ to sugar coupling ratio of 1:1. Transporter activity is driven by a transmembrane Na+ electrochemical gradient set by the Na+/K+ pump. Exclusively recognizes sugar substrates having a pyranose ring with an axial hydroxyl group on carbon 2. Has likely evolved to enable renal reabsorption of D-mannose, an important constituent of oligosaccharide chains of glycoproteins. Contributes to dietary D-fructose reabsorption from glomerular filtrate across the brush border of the kidney. In terms of biological role, appears to have no transporter activity. This chain is Sodium/mannose cotransporter SLC5A10 (SLC5A10), found in Homo sapiens (Human).